Reading from the N-terminus, the 191-residue chain is Cell number regulator 1 (191 aa).

The segment at 13 to 44 (FSAGAPPTAPPPPAAYHQQQQQHGANMDTSRP) is disordered. Residues 27-37 (AYHQQQQQHGA) show a composition bias toward low complexity. Residues 91 to 113 (IASGLVYGLICASTGMGCLYSCL) traverse the membrane as a helical segment.

This sequence belongs to the cornifelin family. As to expression, expressed in roots, coleoptiles, stalks and silks. Detected in leaves, apical meristems, immature ears and pericarps. Highest expression in coleoptiles and silks.

It is found in the membrane. Functionally, acts as a negative regulator of cell number. The chain is Cell number regulator 1 (CNR1) from Zea mays (Maize).